Consider the following 376-residue polypeptide: Spermidine/putrescine import ATP-binding protein PotA (376 aa).

The ABC transporter domain maps to 6-236; the sequence is INIVNVNKSF…PADTFVADFL (231 aa). 38 to 45 contributes to the ATP binding site; the sequence is GPSGCGKT.

The protein belongs to the ABC transporter superfamily. Spermidine/putrescine importer (TC 3.A.1.11.1) family. The complex is composed of two ATP-binding proteins (PotA), two transmembrane proteins (PotB and PotC) and a solute-binding protein (PotD).

The protein resides in the cell inner membrane. It catalyses the reaction ATP + H2O + polyamine-[polyamine-binding protein]Side 1 = ADP + phosphate + polyamineSide 2 + [polyamine-binding protein]Side 1.. Part of the ABC transporter complex PotABCD involved in spermidine/putrescine import. Responsible for energy coupling to the transport system. The protein is Spermidine/putrescine import ATP-binding protein PotA of Fusobacterium nucleatum subsp. nucleatum (strain ATCC 25586 / DSM 15643 / BCRC 10681 / CIP 101130 / JCM 8532 / KCTC 2640 / LMG 13131 / VPI 4355).